A 287-amino-acid chain; its full sequence is Diaminopimelate epimerase (287 aa).

Substrate-binding residues include Asn11, Gln44, and Asn64. Cys73 functions as the Proton donor in the catalytic mechanism. Residues 74–75 (GN), Asn157, Asn190, and 208–209 (ER) contribute to the substrate site. Cys217 (proton acceptor) is an active-site residue. 218 to 219 (GT) is a binding site for substrate.

It belongs to the diaminopimelate epimerase family. Homodimer.

The protein resides in the cytoplasm. The catalysed reaction is (2S,6S)-2,6-diaminopimelate = meso-2,6-diaminopimelate. Its pathway is amino-acid biosynthesis; L-lysine biosynthesis via DAP pathway; DL-2,6-diaminopimelate from LL-2,6-diaminopimelate: step 1/1. Catalyzes the stereoinversion of LL-2,6-diaminopimelate (L,L-DAP) to meso-diaminopimelate (meso-DAP), a precursor of L-lysine and an essential component of the bacterial peptidoglycan. In Halorhodospira halophila (strain DSM 244 / SL1) (Ectothiorhodospira halophila (strain DSM 244 / SL1)), this protein is Diaminopimelate epimerase.